We begin with the raw amino-acid sequence, 531 residues long: Bifunctional aspartate aminotransferase and L-aspartate beta-decarboxylase (531 aa).

Positions 114 and 255 each coordinate L-aspartate. The residue at position 314 (lysine 314) is an N6-(pyridoxal phosphate)lysine. Residue arginine 496 participates in L-aspartate binding.

Belongs to the class-I pyridoxal-phosphate-dependent aminotransferase family. As to quaternary structure, homododecamer. Pyridoxal 5'-phosphate is required as a cofactor.

It carries out the reaction L-aspartate + H(+) = L-alanine + CO2. The catalysed reaction is L-aspartate + 2-oxoglutarate = oxaloacetate + L-glutamate. Inhibited by 10 mM Co(2+), Mn(2+) and Ni(2+), and by 1 mM Cu(2+) and Hg(2+). Its function is as follows. Bifunctional enzyme that has both L-aspartate decarboxylase and transaminase activity. Has high activity with L-aspartate, and much lower activity with D-aspartate, L-lysine and L-glutamine. The sequence is that of Bifunctional aspartate aminotransferase and L-aspartate beta-decarboxylase from Pseudomonas sp.